The primary structure comprises 428 residues: Adenylosuccinate synthetase, chloroplastic (428 aa).

GTP contacts are provided by residues 17–23 (GDEGKGK) and 45–47 (GHT). The active-site Proton acceptor is Asp18. Mg(2+) contacts are provided by Asp18 and Gly45. IMP contacts are provided by residues 18–21 (DEGK), 43–46 (NAGH), Thr135, Arg149, Asn226, Thr241, and Arg305. His46 acts as the Proton donor in catalysis. 301–307 (TTTGRPR) lines the substrate pocket. GTP contacts are provided by residues Arg307, 333 to 335 (KLD), and 416 to 418 (GVG).

The protein belongs to the adenylosuccinate synthetase family. In terms of assembly, homodimer. Mg(2+) serves as cofactor.

Its subcellular location is the plastid. It is found in the chloroplast. It catalyses the reaction IMP + L-aspartate + GTP = N(6)-(1,2-dicarboxyethyl)-AMP + GDP + phosphate + 2 H(+). The protein operates within purine metabolism; AMP biosynthesis via de novo pathway; AMP from IMP: step 1/2. Its function is as follows. Plays an important role in the de novo pathway and in the salvage pathway of purine nucleotide biosynthesis. Catalyzes the first committed step in the biosynthesis of AMP from IMP. The polypeptide is Adenylosuccinate synthetase, chloroplastic (Ostreococcus lucimarinus (strain CCE9901)).